The following is a 187-amino-acid chain: uncharacterized protein (187 aa).

The HTH tetR-type domain occupies 6–66 (TDLAEQIFSA…QFAHRVFSMF (61 aa)). The segment at residues 29–48 (SMLKLAKEANVAAGTIYLYF) is a DNA-binding region (H-T-H motif).

This is an uncharacterized protein from Haemophilus influenzae (strain ATCC 51907 / DSM 11121 / KW20 / Rd).